Consider the following 771-residue polypeptide: Chaperone protein dnaK3 (771 aa).

T198 carries the post-translational modification Phosphothreonine; by autocatalysis. Positions 624–771 are disordered; the sequence is FDDDDDYYNR…GWDDDDDDWF (148 aa). Composition is skewed to basic and acidic residues over residues 630 to 652 and 708 to 734; these read YYNR…RYDD and YDDR…RENA.

The protein belongs to the heat shock protein 70 family.

In terms of biological role, acts as a chaperone. The polypeptide is Chaperone protein dnaK3 (dnaK3) (Synechocystis sp. (strain ATCC 27184 / PCC 6803 / Kazusa)).